We begin with the raw amino-acid sequence, 165 residues long: 3-hydroxyacyl-[acyl-carrier-protein] dehydratase FERN, mitochondrial (165 aa).

The transit peptide at 1 to 35 directs the protein to the mitochondrion; the sequence is MLMKRLFSSSHVFSSSSASSNLLKIGSVLKQARTF. Residues 36 to 124 form the MaoC-like domain; it reads ADDDVLGYSK…AVSIRQIKNK (89 aa).

In terms of assembly, homodimer.

The protein localises to the mitochondrion. It carries out the reaction a (3R)-hydroxyacyl-[ACP] = a (2E)-enoyl-[ACP] + H2O. The protein operates within lipid metabolism; fatty acid biosynthesis. In terms of biological role, 3-hydroxyl-[acyl-carrier-protein] (3-hydroxyl-ACP) dehydratase required for mitochondrial fatty acid synthesis (mtFAS). Essential for photorespiration, tomato morphogenesis and plant development, probably by influencing mitochondrial membrane lipid composition and other lipid metabolic pathways, and by contributing to energy supply and reactive oxygen species (ROS) homeostasis. The protein is 3-hydroxyacyl-[acyl-carrier-protein] dehydratase FERN, mitochondrial of Solanum lycopersicum (Tomato).